Reading from the N-terminus, the 337-residue chain is Transmembrane protein 120B (337 aa).

Residues 1–39 (MSLERCQSEWTEIEQEYQQLQETHKVYRQKLEELTNLQA) adopt a coiled-coil conformation. Helical transmembrane passes span 100-122 (GLYL…AKFA), 130-150 (FKLY…FLLN), 157-175 (IFNF…RESI), 185-205 (GWWV…LTWP), 268-288 (FLLP…VTLF), and 300-320 (QVFM…LTTL).

This sequence belongs to the TMEM120 family.

It is found in the nucleus inner membrane. In terms of biological role, necessary for efficient adipogenesis. Does not show ion channel activity. The protein is Transmembrane protein 120B (tmem120b) of Danio rerio (Zebrafish).